The chain runs to 125 residues: Natriuretic peptide GNP1 (125 aa).

The N-terminal stretch at 1 to 25 (MDPRLVRAGSLVLLLALLVQDQGAA) is a signal peptide. Disordered regions lie at residues 23 to 78 (GAAH…PAFK) and 105 to 125 (VSGM…TGKK). Residues 26–85 (HPARAGQKYKPLIRRSEEDSQALGQEGDVAARAADEEEDAAGPGDALRQPAFKTLLASRE) constitute a propeptide that is removed on maturation. Cys-94 and Cys-110 are oxidised to a cystine.

Belongs to the natriuretic peptide family. Expressed by the venom gland.

It is found in the secreted. Exhibits natriuretic and vasodepressor activity. Acts by stimulating cGMP. The protein is Natriuretic peptide GNP1 of Varanus varius (Lace monitor lizard).